The chain runs to 210 residues: Menaquinone reductase, multiheme cytochrome c subunit (210 aa).

A helical membrane pass occupies residues 20-40 (GGAAPFFVGLVVALVFGWWAF). Residues cysteine 67, cysteine 70, histidine 71, cysteine 88, cysteine 91, histidine 92, cysteine 140, cysteine 143, histidine 144, cysteine 152, cysteine 155, histidine 156, cysteine 186, cysteine 189, histidine 190, cysteine 205, cysteine 208, and histidine 209 each contribute to the heme site.

This sequence belongs to the multiheme cytochrome c family. As to quaternary structure, the Qrc complex is composed of four subunits: QrcA, QrcB, QrcC and QrcD. Can form a supercomplex with the [NiFe] hydrogenase HynA1 and the tetraheme Type I cytochrome c3 TpIc(3), its physiological electron donors. It depends on heme c as a cofactor.

The protein localises to the cell inner membrane. Its function is as follows. Component of the respiratory Qrc complex, that catalyzes the reduction of the menaquinone pool using electrons transferred from the reduced periplasmic cytochrome c3, and which is probably involved in sulfate respiration. Is likely essential for growth on H(2) or formate since the periplasmic hydrogenases and/or formate dehydrogenases act as primary electron donors for the Qrc complex. The chain is Menaquinone reductase, multiheme cytochrome c subunit from Nitratidesulfovibrio vulgaris (strain ATCC 29579 / DSM 644 / CCUG 34227 / NCIMB 8303 / VKM B-1760 / Hildenborough) (Desulfovibrio vulgaris).